Here is a 563-residue protein sequence, read N- to C-terminus: MWGALRSALRPCCRAAVPPQRAYHGDSVARLGTQPDSASSTYQENYEQMKALVSQLHERAQYVRLGGSEKARARHTSRGKLLPRDRIDNLIDPGSPFLEFSQFAGYQLYGDEEVPAGGIITGIGRVSGVECMIVANDATVKGGTYYPVTVKKHVRAQEIALQNRLPCIYLVDSGGANLPRQADTFPDRDHFGRIFYNQAIMSSKNITQIAVVMGSCTAGGAYVPAMADENIIVQKQGTIFLAGPPLVKAATGEEVSAEDLGGADLHCRKSGVTDHYALDDHHALHLTRKVVRSLNYQKKMDVTIEPSEEPLFPADELYGIVGANLKRSFDVREVIARIVDGSRFNEFKALYGDTLVTGFARIFGYPVGIIGNNGVLFSESAKKGAHFVQLCCQRNIPLLFLQNITGFMVGRDYEAEGIAKDGAKMVAAVACAKVPKITVIIGGSYGAGNYGMCGRAYSPRFLYMWPNARISVMGGEQAATVLATVARDQKAREGKQFSSAEEAALKEPIIKRFEEEGNPYYSSARLWDDGIIDPVDTRLVLGLSLSAALNAPIQRTDFGIFRM.

A mitochondrion-targeting transit peptide spans Met-1–Ala-22. Residues Met-49–Pro-306 enclose the CoA carboxyltransferase N-terminal domain. The tract at residues Met-49–Arg-555 is carboxyltransferase. An N6-acetyllysine; alternate modification is found at Lys-70. Lys-70 carries the post-translational modification N6-succinyllysine; alternate. N6-succinyllysine is present on Lys-141. In terms of domain architecture, CoA carboxyltransferase C-terminal spans Glu-309–Arg-555. The interval Arg-343–Asn-372 is acyl-CoA binding. Lys-433 is subject to N6-succinyllysine. Lys-495 is subject to N6-acetyllysine; alternate. N6-succinyllysine; alternate is present on Lys-495. At Lys-511 the chain carries N6-acetyllysine.

Belongs to the AccD/PCCB family. Probably a dodecamer composed of six biotin-containing alpha subunits (MCCC1) and six beta (MCCC2) subunits.

The protein resides in the mitochondrion matrix. The catalysed reaction is 3-methylbut-2-enoyl-CoA + hydrogencarbonate + ATP = 3-methyl-(2E)-glutaconyl-CoA + ADP + phosphate + H(+). The protein operates within amino-acid degradation; L-leucine degradation; (S)-3-hydroxy-3-methylglutaryl-CoA from 3-isovaleryl-CoA: step 2/3. In terms of biological role, carboxyltransferase subunit of the 3-methylcrotonyl-CoA carboxylase, an enzyme that catalyzes the conversion of 3-methylcrotonyl-CoA to 3-methylglutaconyl-CoA, a critical step for leucine and isovaleric acid catabolism. The polypeptide is Methylcrotonoyl-CoA carboxylase beta chain, mitochondrial (Mccc2) (Mus musculus (Mouse)).